A 198-amino-acid polypeptide reads, in one-letter code: Dual specificity protein phosphatase 13B (198 aa).

The region spanning 45 to 193 is the Tyrosine-protein phosphatase domain; it reads HIDEVWPSLF…LQVLDNRLGR (149 aa). Cys-138 acts as the Phosphocysteine intermediate in catalysis.

The protein belongs to the protein-tyrosine phosphatase family. Non-receptor class dual specificity subfamily. In terms of tissue distribution, highly expressed in the testis (at protein level). Also found in the skeletal muscle.

It catalyses the reaction O-phospho-L-tyrosyl-[protein] + H2O = L-tyrosyl-[protein] + phosphate. The catalysed reaction is O-phospho-L-seryl-[protein] + H2O = L-seryl-[protein] + phosphate. It carries out the reaction O-phospho-L-threonyl-[protein] + H2O = L-threonyl-[protein] + phosphate. Its function is as follows. Dual specificity phosphatase that dephosphorylates MAPK8/JNK and MAPK14/p38, but not MAPK1/ERK2, in vitro. Exhibits intrinsic phosphatase activity towards both phospho-seryl/threonyl and -tyrosyl residues, with similar specific activities in vitro. In Homo sapiens (Human), this protein is Dual specificity protein phosphatase 13B.